A 192-amino-acid chain; its full sequence is Ubiquitin-conjugating enzyme E2 T (192 aa).

The UBC core domain occupies 2–152 (QRVSRLKREL…AKKWTEKHAL (151 aa)). Catalysis depends on Cys-86, which acts as the Glycyl thioester intermediate. Residues 150–192 (HALPAPQGSDKESQEKSGSSEGTSHKRKSAEIAEESKKPCREP) are disordered. The segment covering 178 to 192 (SAEIAEESKKPCREP) has biased composition (basic and acidic residues).

Belongs to the ubiquitin-conjugating enzyme family.

The protein resides in the nucleus. The catalysed reaction is S-ubiquitinyl-[E1 ubiquitin-activating enzyme]-L-cysteine + [E2 ubiquitin-conjugating enzyme]-L-cysteine = [E1 ubiquitin-activating enzyme]-L-cysteine + S-ubiquitinyl-[E2 ubiquitin-conjugating enzyme]-L-cysteine.. It participates in protein modification; protein ubiquitination. Functionally, accepts ubiquitin from the E1 complex and catalyzes its covalent attachment to other proteins. Catalyzes monoubiquitination. Involved in DNA repair. The polypeptide is Ubiquitin-conjugating enzyme E2 T (ube2t) (Xenopus laevis (African clawed frog)).